The sequence spans 871 residues: Coatomer subunit gamma-2 (871 aa).

Residues 1–11 (MIKKFDKKDEE) show a composition bias toward basic and acidic residues. Residues 1–20 (MIKKFDKKDEESGSGSNPFR) are disordered. HEAT repeat units follow at residues 64–101 (TEAT…ISED), 283–320 (RELA…KHPS), 321–355 (AVTA…GSES), 356–392 (SVDR…KYPR), 395–430 (SVMM…ENPE), and 467–504 (PVPS…QNEN). Position 594 is a phosphothreonine (threonine 594).

The protein belongs to the COPG family. As to quaternary structure, oligomeric complex. Binds to CDC42. Interacts with JAGN1. Interacts with TMED10 (via cytoplasmic domain).

It localises to the cytoplasm. It is found in the cytosol. Its subcellular location is the golgi apparatus membrane. The protein localises to the cytoplasmic vesicle. The protein resides in the COPI-coated vesicle membrane. In terms of biological role, the coatomer is a cytosolic protein complex that binds to dilysine motifs and reversibly associates with Golgi non-clathrin-coated vesicles, which further mediate biosynthetic protein transport from the ER, via the Golgi up to the trans Golgi network. Coatomer complex is required for budding from Golgi membranes, and is essential for the retrograde Golgi-to-ER transport of dilysine-tagged proteins. In mammals, the coatomer can only be recruited by membranes associated to ADP-ribosylation factors (ARFs), which are small GTP-binding proteins; the complex also influences the Golgi structural integrity, as well as the processing, activity, and endocytic recycling of LDL receptors. The sequence is that of Coatomer subunit gamma-2 (COPG2) from Bos taurus (Bovine).